A 187-amino-acid polypeptide reads, in one-letter code: Large ribosomal subunit protein uL5 (187 aa).

This sequence belongs to the universal ribosomal protein uL5 family. As to quaternary structure, part of the 50S ribosomal subunit; part of the 5S rRNA/L5/L18/L25 subcomplex. Contacts the 5S rRNA and the P site tRNA. Forms a bridge to the 30S subunit in the 70S ribosome.

Its function is as follows. This is one of the proteins that bind and probably mediate the attachment of the 5S RNA into the large ribosomal subunit, where it forms part of the central protuberance. In the 70S ribosome it contacts protein S13 of the 30S subunit (bridge B1b), connecting the 2 subunits; this bridge is implicated in subunit movement. Contacts the P site tRNA; the 5S rRNA and some of its associated proteins might help stabilize positioning of ribosome-bound tRNAs. The polypeptide is Large ribosomal subunit protein uL5 (Mycobacterium bovis (strain BCG / Tokyo 172 / ATCC 35737 / TMC 1019)).